Here is a 603-residue protein sequence, read N- to C-terminus: DNA-directed RNA polymerase subunit beta' N-terminal section (603 aa).

Residues Cys-283, Cys-285, Cys-329, and Cys-332 each contribute to the Zn(2+) site.

It belongs to the RNA polymerase beta' chain family. RpoC1 subfamily. In terms of assembly, in plastids the minimal PEP RNA polymerase catalytic core is composed of four subunits: alpha, beta, beta', and beta''. When a (nuclear-encoded) sigma factor is associated with the core the holoenzyme is formed, which can initiate transcription. Zn(2+) serves as cofactor.

The protein localises to the plastid. The protein resides in the chloroplast. It carries out the reaction RNA(n) + a ribonucleoside 5'-triphosphate = RNA(n+1) + diphosphate. DNA-dependent RNA polymerase catalyzes the transcription of DNA into RNA using the four ribonucleoside triphosphates as substrates. The chain is DNA-directed RNA polymerase subunit beta' N-terminal section (rpoC1A) from Chlamydomonas reinhardtii (Chlamydomonas smithii).